Reading from the N-terminus, the 202-residue chain is MTSTQSVAVCATLILAIFCVNDIHCDPIAEARAAAFGEREARSDGEWKQFDVNGEKIEVNEQENREIIRQAGGDGVEGSVMVIDHAKGLISWSIPRAGECYLIGGVDKQLPDAQELLHYFQSAQGSADGEGVESALDYVKAEDRPVTDLNLLAPEVREACQGKSVYWLEKSSGDNNEPEKRRWCVYAYVRVRGVLVRYRRCW.

Positions 1–25 are cleaved as a signal peptide; sequence MTSTQSVAVCATLILAIFCVNDIHC. Residues 26 to 181 constitute a propeptide that is removed on maturation; it reads DPIAEARAAA…SGDNNEPEKR (156 aa). The BRICHOS domain occupies 73–168; that stretch reads GDGVEGSVMV…ACQGKSVYWL (96 aa). Disulfide bonds link C100-C160 and C184-C201.

Functionally, has antimicrobial activity against the Gram-negative bacteria E.coli and P.mirabilis, the Gram-positive bacterium L.monocytogenes and the yeast C.albicans. This Arenicola marina (Lugworm) protein is Arenicin-1.